Here is an 899-residue protein sequence, read N- to C-terminus: ATP-dependent DNA helicase DDX31 (899 aa).

2 stretches are compositionally biased toward basic residues: residues 1 to 12 (MNKHDQKKKRNK) and 21 to 31 (KKSKGFIKNKK). Positions 1–142 (MNKHDQKKKR…SKHKRNVPSK (142 aa)) are disordered. The span at 76–85 (NMNDDDDNNM) shows a compositional bias: acidic residues. The segment covering 86–102 (NDDYNNNNIKGDYNNNN) has biased composition (low complexity). Residues 106–121 (DDVDDDDYDDDDDDNF) are compositionally biased toward acidic residues. The Q motif motif lies at 173-201 (FCDLKYILSESLINTLEKNEFIKMTSIQK). Residues 204–433 (IPLFFKPNDI…NYCLTNNTMW (230 aa)) enclose the Helicase ATP-binding domain. 217–224 (SMTGSGKT) serves as a coordination point for ATP. The DEAD box motif lies at 332–335 (DEAD). Polar residues predominate over residues 463-472 (NRENSPLNIH). The tract at residues 463–517 (NRENSPLNIHNNDDNDDNDDNDENNGDNNNNNDDNNNNNDDNNNKNNDDDNNNTY) is disordered. Acidic residues predominate over residues 476–487 (DNDDNDDNDENN). The segment covering 488 to 503 (GDNNNNNDDNNNNNDD) has biased composition (low complexity). Residues 593–782 (KITPVLERED…TIINHFKKFC (190 aa)) form the Helicase C-terminal domain.

This sequence belongs to the DEAD box helicase family. DDX31/DBP7 subfamily.

The protein resides in the nucleus. It localises to the nucleolus. It catalyses the reaction ATP + H2O = ADP + phosphate + H(+). Its function is as follows. Has DNA helicase activity and may also have RNA helicase activity; the DNA helicase direction was not determined. Shows ssDNA and RNA dependent ATPase activity. In Plasmodium falciparum (isolate 3D7), this protein is ATP-dependent DNA helicase DDX31 (DDX31).